The primary structure comprises 222 residues: 7-cyano-7-deazaguanine synthase (222 aa).

Residue 7-17 coordinates ATP; sequence LSGGLDSSTVL. The Zn(2+) site is built by Cys-191, Cys-199, Cys-202, and Cys-205.

It belongs to the QueC family. Requires Zn(2+) as cofactor.

It catalyses the reaction 7-carboxy-7-deazaguanine + NH4(+) + ATP = 7-cyano-7-deazaguanine + ADP + phosphate + H2O + H(+). It participates in purine metabolism; 7-cyano-7-deazaguanine biosynthesis. Catalyzes the ATP-dependent conversion of 7-carboxy-7-deazaguanine (CDG) to 7-cyano-7-deazaguanine (preQ(0)). The sequence is that of 7-cyano-7-deazaguanine synthase from Trichodesmium erythraeum (strain IMS101).